We begin with the raw amino-acid sequence, 776 residues long: Protein translocase subunit SecA 2 (776 aa).

Residues Gln80, 98 to 102 (GEGKT), and Asp486 each bind ATP.

Belongs to the SecA family. As to quaternary structure, monomer and homodimer. Part of the essential Sec protein translocation apparatus which comprises SecA, SecYEG and auxiliary proteins SecDF. Other proteins may also be involved.

The protein resides in the cell membrane. Its subcellular location is the cytoplasm. It catalyses the reaction ATP + H2O + cellular proteinSide 1 = ADP + phosphate + cellular proteinSide 2.. Its function is as follows. Part of the Sec protein translocase complex. Interacts with the SecYEG preprotein conducting channel. Has a central role in coupling the hydrolysis of ATP to the transfer of proteins into and across the cell membrane, serving as an ATP-driven molecular motor driving the stepwise translocation of polypeptide chains across the membrane. The chain is Protein translocase subunit SecA 2 from Listeria welshimeri serovar 6b (strain ATCC 35897 / DSM 20650 / CCUG 15529 / CIP 8149 / NCTC 11857 / SLCC 5334 / V8).